Here is a 625-residue protein sequence, read N- to C-terminus: Chaperone protein HtpG (625 aa).

The segment at 1 to 339 (MNKQTLSFQA…SSDLPLNVSR (339 aa)) is a; substrate-binding. The segment at 340-557 (ELLQESRDVK…DGDISGHLAR (218 aa)) is b. The tract at residues 558–625 (LLKQAGQSAP…YVQRVNRLLV (68 aa)) is c.

The protein belongs to the heat shock protein 90 family. As to quaternary structure, homodimer.

It is found in the cytoplasm. Molecular chaperone. Has ATPase activity. The polypeptide is Chaperone protein HtpG (Methylibium petroleiphilum (strain ATCC BAA-1232 / LMG 22953 / PM1)).